A 252-amino-acid chain; its full sequence is Hydroxyacylglutathione hydrolase (252 aa).

Residues H54, H56, D58, H59, H113, D132, and H170 each coordinate Zn(2+).

It belongs to the metallo-beta-lactamase superfamily. Glyoxalase II family. In terms of assembly, monomer. Requires Zn(2+) as cofactor.

It catalyses the reaction an S-(2-hydroxyacyl)glutathione + H2O = a 2-hydroxy carboxylate + glutathione + H(+). The protein operates within secondary metabolite metabolism; methylglyoxal degradation; (R)-lactate from methylglyoxal: step 2/2. Its function is as follows. Thiolesterase that catalyzes the hydrolysis of S-D-lactoyl-glutathione to form glutathione and D-lactic acid. The sequence is that of Hydroxyacylglutathione hydrolase from Synechococcus sp. (strain JA-2-3B'a(2-13)) (Cyanobacteria bacterium Yellowstone B-Prime).